The sequence spans 239 residues: 4-hydroxy-tetrahydrodipicolinate reductase (239 aa).

NAD(+) contacts are provided by residues 12–17 (GASGRM), 94–96 (GTT), and 118–121 (ASNF). H150 acts as the Proton donor/acceptor in catalysis. H151 lines the (S)-2,3,4,5-tetrahydrodipicolinate pocket. K154 functions as the Proton donor in the catalytic mechanism. Position 160–161 (160–161 (GT)) interacts with (S)-2,3,4,5-tetrahydrodipicolinate.

Belongs to the DapB family.

Its subcellular location is the cytoplasm. The catalysed reaction is (S)-2,3,4,5-tetrahydrodipicolinate + NAD(+) + H2O = (2S,4S)-4-hydroxy-2,3,4,5-tetrahydrodipicolinate + NADH + H(+). It carries out the reaction (S)-2,3,4,5-tetrahydrodipicolinate + NADP(+) + H2O = (2S,4S)-4-hydroxy-2,3,4,5-tetrahydrodipicolinate + NADPH + H(+). It participates in amino-acid biosynthesis; L-lysine biosynthesis via DAP pathway; (S)-tetrahydrodipicolinate from L-aspartate: step 4/4. In terms of biological role, catalyzes the conversion of 4-hydroxy-tetrahydrodipicolinate (HTPA) to tetrahydrodipicolinate. This is 4-hydroxy-tetrahydrodipicolinate reductase from Stenotrophomonas maltophilia (strain R551-3).